The chain runs to 153 residues: Insulin-like growth factor 1 (153 aa).

The segment at 49–77 (GPETLCGAELVDALQFVCGDRGFYFNKPT) is b. 3 disulfide bridges follow: Cys54/Cys96, Cys66/Cys109, and Cys95/Cys100. Positions 78 to 89 (GYGSSSRRAPQT) are c. Residues 90 to 110 (GIVDECCFRSCDLRRLEMYCA) are a. The segment at 111-118 (PLKPAKSA) is d. A propeptide spans 119–153 (RSVRAQRHTDMPKAQKEVHLKNASRGSAGNKNYRM) (e peptide). A disordered region spans residues 120-153 (SVRAQRHTDMPKAQKEVHLKNASRGSAGNKNYRM). The span at 125-138 (RHTDMPKAQKEVHL) shows a compositional bias: basic and acidic residues. Positions 142 to 153 (SRGSAGNKNYRM) are enriched in polar residues.

It belongs to the insulin family. Forms a ternary complex with IGFR1 and ITGAV:ITGB3. Forms a ternary complex with IGFR1 and ITGA6:ITGB4. Forms a ternary complex with IGFBP3 and ALS.

Its subcellular location is the secreted. Its function is as follows. The insulin-like growth factors, isolated from plasma, are structurally and functionally related to insulin but have a much higher growth-promoting activity. May be a physiological regulator of [1-14C]-2-deoxy-D-glucose (2DG) transport and glycogen synthesis in osteoblasts. Stimulates glucose transport in bone-derived osteoblastic (PyMS) cells and is effective at much lower concentrations than insulin, not only regarding glycogen and DNA synthesis but also with regard to enhancing glucose uptake. May play a role in synapse maturation. Ca(2+)-dependent exocytosis of IGF1 is required for sensory perception of smell in the olfactory bulb. Acts as a ligand for IGF1R. Binds to the alpha subunit of IGF1R, leading to the activation of the intrinsic tyrosine kinase activity which autophosphorylates tyrosine residues in the beta subunit thus initiating a cascade of down-stream signaling events leading to activation of the PI3K-AKT/PKB and the Ras-MAPK pathways. Binds to integrins ITGAV:ITGB3 and ITGA6:ITGB4. Its binding to integrins and subsequent ternary complex formation with integrins and IGFR1 are essential for IGF1 signaling. Induces the phosphorylation and activation of IGFR1, MAPK3/ERK1, MAPK1/ERK2 and AKT1. As part of the MAPK/ERK signaling pathway, acts as a negative regulator of apoptosis in cardiomyocytes via promotion of STUB1/CHIP-mediated ubiquitination and degradation of ICER-type isoforms of CREM. This is Insulin-like growth factor 1 from Ailuropoda melanoleuca (Giant panda).